The following is a 658-amino-acid chain: UvrABC system protein B (658 aa).

The 154-residue stretch at 25–178 folds into the Helicase ATP-binding domain; sequence KSLKNKNHYQ…KSFLLKLVEM (154 aa). 38–45 contacts ATP; it reads GVTGSGKT. Positions 91–114 match the Beta-hairpin motif; the sequence is HFDYYQPESYIPRRDLFIEKDSSI. The region spanning 433–607 is the Helicase C-terminal domain; that stretch reads QVQDLFDEIK…ELKLRDDETK (175 aa). In terms of domain architecture, UVR spans 623–658; that stretch reads EKIIKELDKKMRECAKNLDFEEAMHLRDEIAKLRTL.

Belongs to the UvrB family. In terms of assembly, forms a heterotetramer with UvrA during the search for lesions. Interacts with UvrC in an incision complex.

The protein localises to the cytoplasm. Its function is as follows. The UvrABC repair system catalyzes the recognition and processing of DNA lesions. A damage recognition complex composed of 2 UvrA and 2 UvrB subunits scans DNA for abnormalities. Upon binding of the UvrA(2)B(2) complex to a putative damaged site, the DNA wraps around one UvrB monomer. DNA wrap is dependent on ATP binding by UvrB and probably causes local melting of the DNA helix, facilitating insertion of UvrB beta-hairpin between the DNA strands. Then UvrB probes one DNA strand for the presence of a lesion. If a lesion is found the UvrA subunits dissociate and the UvrB-DNA preincision complex is formed. This complex is subsequently bound by UvrC and the second UvrB is released. If no lesion is found, the DNA wraps around the other UvrB subunit that will check the other stand for damage. The protein is UvrABC system protein B of Helicobacter acinonychis (strain Sheeba).